Reading from the N-terminus, the 332-residue chain is Malate dehydrogenase (332 aa).

NAD(+)-binding positions include 16-17, D43, and G90; that span reads QI. R99 contacts oxaloacetate. The NAD(+) site is built by Q113 and N132. Oxaloacetate contacts are provided by N132, R163, H188, and S243. H188 acts as the Proton acceptor in catalysis.

This sequence belongs to the LDH/MDH superfamily. MDH type 2 family. In terms of assembly, homodimer.

Its subcellular location is the cytoplasm. It catalyses the reaction (S)-malate + NAD(+) = oxaloacetate + NADH + H(+). Its function is as follows. Catalyzes the reduction of the carbonyl group of oxalacetic acid. No activity with pulegone. This Nicotiana tabacum (Common tobacco) protein is Malate dehydrogenase (MD1).